A 553-amino-acid chain; its full sequence is Zinc finger protein Elbow (553 aa).

Disordered regions lie at residues 59-243 (STKQ…MHSP) and 388-407 (GGGGGGSSKSSGSQGGSGGS). Low complexity-rich tracts occupy residues 96–110 (SPVSSHSSSVSTGSV) and 121–134 (SSSSSKPTPTTFKP). Composition is skewed to polar residues over residues 137–146 (PNNNISNITT), 153–173 (TNLSSNNTSAQQRVKTPKSMT), and 224–236 (TASTTPGRSNSKE). Residues 287-480 (SASAAAAAAS…PDAVLSAAAA (194 aa)) form a self-association region. The tract at residues 287 to 553 (SASAAAAAAS…YGPRMGSSHP (267 aa)) is interaction with noc. A compositionally biased stretch (gly residues) spans 388 to 406 (GGGGGGSSKSSGSQGGSGG). The segment at 437–466 (YVCSWIGSDAAYCGKRFGTSDDLFQHLRTH) adopts a C2H2-type zinc-finger fold.

The protein belongs to the Elbow/Noc family. In terms of assembly, self-associates. Interacts with gro and noc.

May negatively regulate Notch-induced cell proliferation in the eye-head primordium. May act in leg and wing primordia to negatively regulate body-wall specifying genes and thereby promote appendage formation. Required for tracheal development. The polypeptide is Zinc finger protein Elbow (elB) (Drosophila melanogaster (Fruit fly)).